We begin with the raw amino-acid sequence, 393 residues long: HORMA domain-containing protein 1 (393 aa).

In terms of domain architecture, HORMA spans 24-226 (QQSLVLVKRL…TPFHTFKVKV (203 aa)). A disordered region spans residues 322-393 (SKTSELDVSE…RKFSEPKERI (72 aa)). A compositionally biased stretch (basic and acidic residues) spans 352–361 (KSKENRKRTQ). Ser375 bears the Phosphoserine mark. Residues 382–385 (KRRK) carry the Nuclear localization signal motif.

Interacts with HORMAD2. Interacts with IHO1. Post-translationally, phosphorylated at Ser-376 in a SPO11-dependent manner.

The protein resides in the nucleus. Its subcellular location is the chromosome. Functionally, plays a key role in meiotic progression. Regulates 3 different functions during meiosis: ensures that sufficient numbers of processed DNA double-strand breaks (DSBs) are available for successful homology search by increasing the steady-state numbers of single-stranded DSB ends. Promotes synaptonemal-complex formation independently of its role in homology search. Plays a key role in the male mid-pachytene checkpoint and the female meiotic prophase checkpoint: required for efficient build-up of ATR activity on unsynapsed chromosome regions, a process believed to form the basis of meiotic silencing of unsynapsed chromatin (MSUC) and meiotic prophase quality control in both sexes. The sequence is that of HORMA domain-containing protein 1 (HORMAD1) from Bos taurus (Bovine).